The following is a 1319-amino-acid chain: Chitin-binding domain protein cbd-1 (1319 aa).

Residues 1-19 (MGPQLATVSLLLLTFFSNS) form the signal peptide. Chitin-binding type-2 domains are found at residues 28–83 (ATEC…ECRV), 96–141 (EFDC…TQDC), and 190–236 (DFDC…QSCD). Intrachain disulfides connect cysteine 61–cysteine 72, cysteine 128–cysteine 141, and cysteine 222–cysteine 235. Positions 250–271 (YSTSTITTPQEDDSEYSSTTSA) are disordered. The Chitin-binding type-2 4 domain occupies 304–357 (PFVCQEGQVNSFGMCSSRFNRCQNNSVRSKQCPVNTLFESSLVMCVFDLPQCQP). Asparagine 327 carries N-linked (GlcNAc...) asparagine glycosylation. Cysteine 335 and cysteine 348 form a disulfide bridge. Residues 504–524 (KNRHSKKQLGPHEDPDGYDDE) form a disordered region. Basic and acidic residues predominate over residues 513-524 (GPHEDPDGYDDE). Residues 566-614 (NKDCQQYTTPTFLTFGDCFDQFIFCSGNGINRMAACPIGETFDKTLRSC) form the Chitin-binding type-2 5 domain. Cysteine 601 and cysteine 614 are joined by a disulfide. Residues 649 to 682 (VTTQSTWNDQPSTTQAPNSYESYTTQYSSNDVPS) form a disordered region. 3 Chitin-binding type-2 domains span residues 689-745 (GDRC…ECGS), 782-838 (GDRC…KCQT), and 883-942 (VDTC…ACDE). Cysteine 721 and cysteine 734 are oxidised to a cystine. The segment at 742 to 764 (ECGSQGSTSSPVITTPGQDQSSN) is disordered. The segment covering 745–764 (SQGSTSSPVITTPGQDQSSN) has biased composition (polar residues). 2 disulfides stabilise this stretch: cysteine 814-cysteine 827 and cysteine 916-cysteine 929. Over residues 984–995 (TGSTKYSTTDSG) the composition is skewed to polar residues. Residues 984–1031 (TGSTKYSTTDSGEYTIPYGDETTSTRSYDRADNDSEDEEEDDVEHDQK) form a disordered region. N-linked (GlcNAc...) asparagine glycosylation is present at asparagine 1016. Over residues 1017–1027 (DSEDEEEDDVE) the composition is skewed to acidic residues. Chitin-binding type-2 domains follow at residues 1029–1081 (DQKC…GCGK), 1105–1163 (EGRC…ACTV), 1179–1237 (SAFC…GCEN), and 1242–1298 (NGEC…SCSG). 4 disulfides stabilise this stretch: cysteine 1060–cysteine 1073, cysteine 1139–cysteine 1152, cysteine 1213–cysteine 1226, and cysteine 1274–cysteine 1287. Residues 1297–1312 (SGQASDSNSSYGSSTY) are compositionally biased toward low complexity. The tract at residues 1297–1319 (SGQASDSNSSYGSSTYNDDKSGY) is disordered. A glycan (N-linked (GlcNAc...) asparagine) is linked at asparagine 1304.

Its subcellular location is the secreted. The protein resides in the extracellular space. It is found in the extracellular matrix. In terms of biological role, in unfertilized oocytes, maintains egg-1 and egg-2 at the plasma membrane together with chitin synthase chs-1 and kinase mbk-2. Essential for the formation of a continuous and cohesive chitin layer following fertilization. The sequence is that of Chitin-binding domain protein cbd-1 from Caenorhabditis elegans.